The chain runs to 198 residues: FMN-dependent NADH:quinone oxidoreductase (198 aa).

FMN is bound by residues 92 to 95 (MWNL) and 136 to 139 (SRGG).

The protein belongs to the azoreductase type 1 family. Homodimer. It depends on FMN as a cofactor.

It carries out the reaction 2 a quinone + NADH + H(+) = 2 a 1,4-benzosemiquinone + NAD(+). The enzyme catalyses N,N-dimethyl-1,4-phenylenediamine + anthranilate + 2 NAD(+) = 2-(4-dimethylaminophenyl)diazenylbenzoate + 2 NADH + 2 H(+). Its function is as follows. Quinone reductase that provides resistance to thiol-specific stress caused by electrophilic quinones. Functionally, also exhibits azoreductase activity. Catalyzes the reductive cleavage of the azo bond in aromatic azo compounds to the corresponding amines. The chain is FMN-dependent NADH:quinone oxidoreductase from Clostridium perfringens (strain SM101 / Type A).